The chain runs to 380 residues: Alcohol dehydrogenase (380 aa).

Residues cysteine 48, threonine 50, histidine 70, cysteine 100, cysteine 103, cysteine 106, cysteine 114, and cysteine 178 each coordinate Zn(2+). Threonine 50 and histidine 70 together coordinate an alcohol. Threonine 50 contributes to the NAD(+) binding site. NAD(+)-binding positions include 203 to 208, aspartate 227, arginine 232, threonine 273, valine 296, 296 to 298, phenylalanine 323, and arginine 373; these read GLGAVG and VGV.

It belongs to the zinc-containing alcohol dehydrogenase family. As to quaternary structure, homodimer. Requires Zn(2+) as cofactor.

The protein localises to the cytoplasm. It carries out the reaction a primary alcohol + NAD(+) = an aldehyde + NADH + H(+). The enzyme catalyses a secondary alcohol + NAD(+) = a ketone + NADH + H(+). The protein is Alcohol dehydrogenase (ADH) of Malus domestica (Apple).